Here is a 110-residue protein sequence, read N- to C-terminus: Large ribosomal subunit protein uL22 (110 aa).

It belongs to the universal ribosomal protein uL22 family. In terms of assembly, part of the 50S ribosomal subunit.

In terms of biological role, this protein binds specifically to 23S rRNA; its binding is stimulated by other ribosomal proteins, e.g. L4, L17, and L20. It is important during the early stages of 50S assembly. It makes multiple contacts with different domains of the 23S rRNA in the assembled 50S subunit and ribosome. Functionally, the globular domain of the protein is located near the polypeptide exit tunnel on the outside of the subunit, while an extended beta-hairpin is found that lines the wall of the exit tunnel in the center of the 70S ribosome. This chain is Large ribosomal subunit protein uL22, found in Aggregatibacter actinomycetemcomitans (Actinobacillus actinomycetemcomitans).